Here is a 206-residue protein sequence, read N- to C-terminus: Small ribosomal subunit protein uS4A (206 aa).

Residues 98–163 (MRLDNVVYRL…SERFKMFAEN (66 aa)) enclose the S4 RNA-binding domain.

This sequence belongs to the universal ribosomal protein uS4 family. In terms of assembly, part of the 30S ribosomal subunit. Contacts protein S5. The interaction surface between S4 and S5 is involved in control of translational fidelity.

In terms of biological role, one of the primary rRNA binding proteins, it binds directly to 16S rRNA where it nucleates assembly of the body of the 30S subunit. Its function is as follows. With S5 and S12 plays an important role in translational accuracy. In Clostridium perfringens (strain SM101 / Type A), this protein is Small ribosomal subunit protein uS4A.